Here is a 1790-residue protein sequence, read N- to C-terminus: Atrochrysone carboxylic acid synthase (1790 aa).

The interval 27–265 (RDLQDLFRQA…ALPVYGGLCH (239 aa)) is N-terminal acylcarrier protein transacylase domain (SAT). The Ketosynthase family 3 (KS3) domain maps to 399 to 833 (QSKLAIVGMS…GGNTTMILED (435 aa)). Residues C572, H708, and H751 each act as for beta-ketoacyl synthase activity in the active site. Residues 934 to 1254 (FSFTGQGASH…IAQLYTVGVD (321 aa)) are malonyl-CoA:ACP transacylase (MAT) domain. Residues 1323–1475 (QQIVEQVFDT…SLTHLVRDRI (153 aa)) are N-terminal hotdog fold. Positions 1323-1634 (QQIVEQVFDT…FHRYRRILLE (312 aa)) constitute a PKS/mFAS DH domain. The Proton acceptor; for dehydratase activity role is filled by H1357. The tract at residues 1357–1631 (HRMNDCGVAT…GIEFHRYRRI (275 aa)) is product template (PT) domain. The segment at 1487 to 1634 (ANRLSHNMAY…FHRYRRILLE (148 aa)) is C-terminal hotdog fold. Catalysis depends on D1545, which acts as the Proton donor; for dehydratase activity. Positions 1644-1667 (NLDDTTETKDISSSTQHSVPVSRQ) are disordered. Polar residues predominate over residues 1654–1664 (ISSSTQHSVPV). A Carrier domain is found at 1715–1789 (SSITNRAMQL…DLRNWLEETY (75 aa)). O-(pantetheine 4'-phosphoryl)serine is present on S1749.

It catalyses the reaction holo-[ACP] + 8 malonyl-CoA + 8 H(+) = atrochrysone carboxyl-[ACP] + 8 CO2 + 8 CoA + 2 H2O. It functions in the pathway pigment biosynthesis. In terms of biological role, non-reducing polyketide synthase; part of the gene cluster that mediates the biosynthesis of the bianthraquinone cladofulvin, a conidial pigment not required for virulence but that plays a role in fitness and resistance to environmental stresses including UV light and low-temperature stress. The pathway begins with the synthesis of atrochrysone thioester by the polyketide synthase (PKS) claG. The atrochrysone carboxyl ACP thioesterase claF then breaks the thioester bond and releases the atrochrysone carboxylic acid from claG. This compound is decarboxylated by claH to yield emodin, which is further converted to chrysophanol hydroquinone by the reductase claC and the dehydratase claB. The cytochrome P450 monooxygenase claM then catalyzes the dimerization of nataloe-emodin to cladofulvin. The protein is Atrochrysone carboxylic acid synthase of Passalora fulva (Tomato leaf mold).